The sequence spans 500 residues: Neuronal acetylcholine receptor subunit beta-2 (500 aa).

The signal sequence occupies residues 1-24 (MAGHSNSMALFSFSLLWLCSGVLG). Residues 25-237 (TDTEERLVEH…IIRRKPLFYT (213 aa)) are Extracellular-facing. N50 and N167 each carry an N-linked (GlcNAc...) asparagine glycan. An intrachain disulfide couples C154 to C168. Residues 238 to 258 (INLIIPCVLITSLAILVFYLP) form a helical membrane-spanning segment. Residues 259–266 (SDCGEKMT) lie on the Cytoplasmic side of the membrane. The helical transmembrane segment at 267–287 (LCISVLLALTVFLLLISKIVP) threads the bilayer. Residues 288–299 (PTSLDVPLVGKY) are Extracellular-facing. Residues 300 to 320 (LMFTMVLVTFSIVTSVCVLNV) traverse the membrane as a helical segment. Residues 321 to 458 (HHRSPTTHTM…WKYVAMVIDR (138 aa)) are Cytoplasmic-facing. Residues 459–479 (LFLWIFVFVCVFGTVGMFLQP) form a helical membrane-spanning segment.

The protein belongs to the ligand-gated ion channel (TC 1.A.9) family. Acetylcholine receptor (TC 1.A.9.1) subfamily. Beta-2/CHRNB2 sub-subfamily. In terms of assembly, neuronal AChR is a heteropentamer composed of two different types of subunits: alpha and beta. CHRNB2/Beta-2 subunit can be combined to CHRNA2/alpha-2, CHRNA3/alpha-3 or CHRNA4/alpha-4, CHRNA5/alpha-5, CHRNA6/alpha-6 and CHRNB3/beta-3 to give rise to functional receptors. CHRNA2:CHRNB2 and CHRNA4:CHRNB2 nAChR complexes exist in two subtypes: LS (low agonist sensitivity) with a (CHRNA2/4)3:(CHRNB2)2 and HS (high agonist sensitivity) with a (CHRNA2/4)2:(CHRNB2)3 stoichiometry; the subtypes differ in their subunit binding interfaces which are involved in ligand binding. Cells produce predominantly an (CHRNA4)3:(CHRNB2)2 nAChR. The stoichiometric form (CHRNA4)2:(CHRNB2)3 expression is selectively up-regulated by nicotine and has lower single channel conductance and calcium permeability. Also part of the stoichiometric forms: (CHRNA4:CHRNB2)2:CHRNB3 or (CHRNA6:CHRNB2)2:CHRNB3. Can form heteropentamers with CHRNA7, mainly found in basal forebrain cholinergic neurons. Interacts with RIC3; which is required for proper folding and assembly. Interacts with LYPD6. Expressed in most regions of the CNS.

The protein resides in the synaptic cell membrane. It is found in the cell membrane. It catalyses the reaction Ca(2+)(in) = Ca(2+)(out). The enzyme catalyses K(+)(in) = K(+)(out). The catalysed reaction is Na(+)(in) = Na(+)(out). Its activity is regulated as follows. Activated by a myriad of ligands such as acetylcholine, cytisine, nicotine, choline and epibatidine. Channel potentiation by calcium is stoichiometry-selective, CHRNA4:CHRNB2 nACh receptor is achieved by calcium association with topographically distinct sites framed by anionic residues within the CHRNA4 subunit and between the CHRNA4 and CHRNB2 subunits. Oligomeric amyloid-beta protein 42 activates specifially CHRNA7:CHRNB2 nAchRs. nAChR activity is inhibited by the antagonist alpha-conotoxins BuIA, PnIA, PnIC, GID and MII, small disulfide-constrained peptides from cone snails. In terms of biological role, component of neuronal acetylcholine receptors (nAChRs) that function as pentameric, ligand-gated cation channels with high calcium permeability among other activities. nAChRs are excitatory neurotrasnmitter receptors formed by a collection of nAChR subunits known to mediate synaptic transmission in the nervous system and the neuromuscular junction. Each nAchR subunit confers differential attributes to channel properties, including activation, deactivation and desensitization kinetics, pH sensitivity, cation permeability, and binding to allosteric modulators. CHRNB2 forms heteropentameric neuronal acetylcholine receptors with CHRNA2, CHRNA3, CHRNA4 and CHRNA6, as well as CHRNA5 and CHRNB3 as accesory subunits. Found in two major stoichiometric forms,(CHRNA4)3:(CHRNB2)2 and (CHRNA4)2:(CHRNB2)3, the two stoichiometric forms differ in their unitary conductance, calcium permeability, ACh sensitivity and potentiation by divalent cation. Heteropentameric channels with CHRNA6 and CHRNA4 exhibit high sensitivity to ACh and nicotine and are predominantly expressed in only a few brain areas, including dopaminergic neurons, norepirephrine neurons and cells of the visual system. nAChrs containing CHRNA6 subunits mediate endogenous cholinergic modulation of dopamine and gamma-aminobutyric acid (GABA) release in response to nicotine at nerve terminals. Also forms functional nAChRs with other subunits such as CHRNA7:CHRNB2, mainly expressed in basal forebrain cholinergic neurons. This is Neuronal acetylcholine receptor subunit beta-2 (Chrnb2) from Rattus norvegicus (Rat).